The sequence spans 236 residues: Small ribosomal subunit protein uS2c (236 aa).

The protein belongs to the universal ribosomal protein uS2 family.

Its subcellular location is the plastid. It is found in the chloroplast. The protein is Small ribosomal subunit protein uS2c (rps2) of Manihot esculenta (Cassava).